A 308-amino-acid polypeptide reads, in one-letter code: MSDLTRFTQYEHLDKVKKVVAIGGGHGLGRLMSALSFMKSRLTGIVTTTDNGGSTGRIRLNHGGIAWGDLRNCLNQIITEPSTASSLFEYRFTGQGELSGHNLGNLMLKALENMHIRPVEAIHLVRELLHVKSHIFPMSESPVHLAAVLQSGASIVGEVGIDNLTELPKSIFLVPLVKATPEAIEALQEADVILFGPGSFLTSILPPILLPEVIEALQKSHAKKIFIDNLALEQSPAASLSLSDRIQWIHHTVGKEIIDATIVPTNANDLCENLSLKVMVRPLQADDISYRHDRSLLSQAIDDLLGEL.

This sequence belongs to the gluconeogenesis factor family.

Its subcellular location is the cytoplasm. Required for morphogenesis under gluconeogenic growth conditions. The sequence is that of Putative gluconeogenesis factor from Pasteurella multocida (strain Pm70).